Consider the following 176-residue polypeptide: Cytochrome b (176 aa).

3 helical membrane-spanning segments follow: residues 33-53, 77-98, and 113-133; these read FGSL…FLAM, WLLR…YLHI, and WNVG…GYVL. Heme b is bound by residues His-83 and His-97.

Belongs to the cytochrome b family. In terms of assembly, the cytochrome bc1 complex contains 11 subunits: 3 respiratory subunits (MT-CYB, CYC1 and UQCRFS1), 2 core proteins (UQCRC1 and UQCRC2) and 6 low-molecular weight proteins (UQCRH/QCR6, UQCRB/QCR7, UQCRQ/QCR8, UQCR10/QCR9, UQCR11/QCR10 and a cleavage product of UQCRFS1). This cytochrome bc1 complex then forms a dimer. It depends on heme b as a cofactor.

The protein resides in the mitochondrion inner membrane. Component of the ubiquinol-cytochrome c reductase complex (complex III or cytochrome b-c1 complex) that is part of the mitochondrial respiratory chain. The b-c1 complex mediates electron transfer from ubiquinol to cytochrome c. Contributes to the generation of a proton gradient across the mitochondrial membrane that is then used for ATP synthesis. The chain is Cytochrome b (MT-CYB) from Eumops glaucinus (Wagner's mastiff bat).